The chain runs to 437 residues: ATP-dependent RNA helicase RhlB (437 aa).

The Q motif signature appears at 9–37 (QKFADLGLQPQVTEGLEKKGFEYCTPIQA). The Helicase ATP-binding domain maps to 40 to 219 (LPVLLTGQDI…FEHMHNPEHV (180 aa)). 53–60 (AQTGTGKT) is a binding site for ATP. The short motif at 165 to 168 (DEAD) is the DEAD box element. A Helicase C-terminal domain is found at 245–390 (ALLQTLIEEE…VSEYDASALI (146 aa)). Residues 397–437 (IRMRAPRVQQRRTNTGGTRSGNRKPQGRRPRQPRQSAPKQS) form a disordered region. Positions 417–428 (GNRKPQGRRPRQ) are enriched in basic residues.

This sequence belongs to the DEAD box helicase family. RhlB subfamily. In terms of assembly, component of the RNA degradosome, which is a multiprotein complex involved in RNA processing and mRNA degradation.

It is found in the cytoplasm. The catalysed reaction is ATP + H2O = ADP + phosphate + H(+). DEAD-box RNA helicase involved in RNA degradation. Has RNA-dependent ATPase activity and unwinds double-stranded RNA. This Vibrio parahaemolyticus serotype O3:K6 (strain RIMD 2210633) protein is ATP-dependent RNA helicase RhlB.